We begin with the raw amino-acid sequence, 341 residues long: Phosphate acyltransferase (341 aa).

It belongs to the PlsX family. As to quaternary structure, homodimer. Probably interacts with PlsY.

The protein localises to the cytoplasm. It catalyses the reaction a fatty acyl-[ACP] + phosphate = an acyl phosphate + holo-[ACP]. It participates in lipid metabolism; phospholipid metabolism. In terms of biological role, catalyzes the reversible formation of acyl-phosphate (acyl-PO(4)) from acyl-[acyl-carrier-protein] (acyl-ACP). This enzyme utilizes acyl-ACP as fatty acyl donor, but not acyl-CoA. In Lacticaseibacillus casei (strain BL23) (Lactobacillus casei), this protein is Phosphate acyltransferase.